A 64-amino-acid polypeptide reads, in one-letter code: Large ribosomal subunit protein bL33 (64 aa).

Belongs to the bacterial ribosomal protein bL33 family.

The chain is Large ribosomal subunit protein bL33 from Synechococcus elongatus (strain ATCC 33912 / PCC 7942 / FACHB-805) (Anacystis nidulans R2).